The following is a 29-amino-acid chain: Glucagon (29 aa).

A Phosphoserine modification is found at S2.

Belongs to the glucagon family.

The protein resides in the secreted. Its function is as follows. Glucagon plays a key role in glucose metabolism and homeostasis. Regulates blood glucose by increasing gluconeogenesis and decreasing glycolysis. This chain is Glucagon (GCG), found in Oryctolagus cuniculus (Rabbit).